We begin with the raw amino-acid sequence, 387 residues long: Ubiquitin-conjugating enzyme E2 25 (387 aa).

Positions 117 to 164 (APPVRDDIDEGRGSDISDTTSEPIDDDMAGDGEVDDDDEEEEDDEDAD) are disordered. Residues 120–131 (VRDDIDEGRGSD) show a composition bias toward basic and acidic residues. The segment covering 139 to 164 (PIDDDMAGDGEVDDDDEEEEDDEDAD) has biased composition (acidic residues). In terms of domain architecture, UBC core spans 214 to 380 (TATDRLMKEI…QQIHAKSGWY (167 aa)). The active-site Glycyl thioester intermediate is C315.

It belongs to the ubiquitin-conjugating enzyme family. In terms of tissue distribution, in the embryo, expressed in precursor neuron and muscle cells and in other cells such as hypodermal cells. After hatching of L1 larvae and in all subsequent stages, strongest expression in pharyngeal muscle and anal muscle cells. In L4 larvae and adolescent hermaphrodites, also expressed in the vulval muscles. Expression also detected in all four nerve cords and in neurons with weaker levels in all body wall muscles.

Its subcellular location is the cytoplasm. The protein resides in the nucleus. It carries out the reaction S-ubiquitinyl-[E1 ubiquitin-activating enzyme]-L-cysteine + [E2 ubiquitin-conjugating enzyme]-L-cysteine = [E1 ubiquitin-activating enzyme]-L-cysteine + S-ubiquitinyl-[E2 ubiquitin-conjugating enzyme]-L-cysteine.. It participates in protein modification; protein ubiquitination. Its function is as follows. Catalyzes the covalent attachment of ubiquitin to other proteins (Potential). Required for the maintenance of neuromuscular function. This is Ubiquitin-conjugating enzyme E2 25 from Caenorhabditis elegans.